Reading from the N-terminus, the 197-residue chain is Chalcone--flavanone isomerase 2 (197 aa).

Substrate-binding residues include Thr-23, Asn-88, and Thr-165.

The protein belongs to the chalcone isomerase family.

The enzyme catalyses a chalcone = a flavanone.. It participates in secondary metabolite biosynthesis; flavonoid biosynthesis. In terms of biological role, catalyzes the intramolecular cyclization of bicyclic chalcones into tricyclic (S)-flavanones. Responsible for the isomerization of 4,2',4',6'-tetrahydroxychalcone (also termed chalcone) into naringenin. This is Chalcone--flavanone isomerase 2 (CHI2) from Medicago sativa (Alfalfa).